We begin with the raw amino-acid sequence, 237 residues long: Ribosomal RNA small subunit methyltransferase G (237 aa).

S-adenosyl-L-methionine-binding positions include Gly78, Phe83, 129-130 (AE), and Arg148.

It belongs to the methyltransferase superfamily. RNA methyltransferase RsmG family.

It localises to the cytoplasm. In terms of biological role, specifically methylates the N7 position of a guanine in 16S rRNA. The chain is Ribosomal RNA small subunit methyltransferase G from Streptococcus pyogenes serotype M12 (strain MGAS2096).